The sequence spans 108 residues: MWGAFLLYVSMKMGGTAGQSLEQPSEVTAVEGAIVQINCTYQTSGFYGLSWYQQHDGGAPTFLSYNALDGLEETGRFSSFLSRSDSYGYLLLQELQMKDSASYFCAVR.

An N-terminal signal peptide occupies residues 1–18 (MWGAFLLYVSMKMGGTAG). In terms of domain architecture, Ig-like spans 19–108 (QSLEQPSEVT…DSASYFCAVR (90 aa)). The N-linked (GlcNAc...) asparagine glycan is linked to Asn38. Cys39 and Cys105 are joined by a disulfide.

In terms of assembly, alpha-beta TR is a heterodimer composed of an alpha and beta chain; disulfide-linked. The alpha-beta TR is associated with the transmembrane signaling CD3 coreceptor proteins to form the TR-CD3 (TcR or TCR). The assembly of alpha-beta TR heterodimers with CD3 occurs in the endoplasmic reticulum where a single alpha-beta TR heterodimer associates with one CD3D-CD3E heterodimer, one CD3G-CD3E heterodimer and one CD247 homodimer forming a stable octameric structure. CD3D-CD3E and CD3G-CD3E heterodimers preferentially associate with TR alpha and TR beta chains, respectively. The association of the CD247 homodimer is the last step of TcR assembly in the endoplasmic reticulum and is required for transport to the cell surface.

The protein resides in the cell membrane. Its function is as follows. V region of the variable domain of T cell receptor (TR) alpha chain that participates in the antigen recognition. Alpha-beta T cell receptors are antigen specific receptors which are essential to the immune response and are present on the cell surface of T lymphocytes. Recognize peptide-major histocompatibility (MH) (pMH) complexes that are displayed by antigen presenting cells (APC), a prerequisite for efficient T cell adaptive immunity against pathogens. Binding of alpha-beta TR to pMH complex initiates TR-CD3 clustering on the cell surface and intracellular activation of LCK that phosphorylates the ITAM motifs of CD3G, CD3D, CD3E and CD247 enabling the recruitment of ZAP70. In turn ZAP70 phosphorylates LAT, which recruits numerous signaling molecules to form the LAT signalosome. The LAT signalosome propagates signal branching to three major signaling pathways, the calcium, the mitogen-activated protein kinase (MAPK) kinase and the nuclear factor NF-kappa-B (NF-kB) pathways, leading to the mobilization of transcription factors that are critical for gene expression and essential for T cell growth and differentiation. The T cell repertoire is generated in the thymus, by V-(D)-J rearrangement. This repertoire is then shaped by intrathymic selection events to generate a peripheral T cell pool of self-MH restricted, non-autoaggressive T cells. Post-thymic interaction of alpha-beta TR with the pMH complexes shapes TR structural and functional avidity. In Homo sapiens (Human), this protein is T cell receptor alpha variable 1-1.